A 21-amino-acid polypeptide reads, in one-letter code: Tricyclic peptide MS-271 (21 aa).

A cross-link (3-cysteinyl-aspartic acid (Cys-Asp)) is located at residues 1–9; it reads CLGVGSCND. Cystine bridges form between Cys-1–Cys-13 and Cys-7–Cys-19. Position 21 is a D-tryptophan (Trp-21).

Its function is as follows. Inhibits chicken myosin light chain kinase with an IC(50) of 8 M. Does not inhibit bovine cAMP-dependent protein kinase or rat protein kinase C. Antibacterial activity against the Gram-positive bacteria B.subtilis, E.faecium and S.aureus. No antibacterial activity against the Gram-negative bacteria E.coli, K.pneumoniae, P.aeruginosa, P.vulgaris, S.sonnei and S.typhosa. No antifungal activity against C.albicans. In Streptomyces sp, this protein is Tricyclic peptide MS-271.